Here is a 301-residue protein sequence, read N- to C-terminus: MGKQFDKKITWTIKNFASLLSDLIYSDHFVVGGCKWHLRAYPKGYNNANSLSLFLGVAVPTSLPSGWRRHTKFRLTLVNQLSDKLSQSKLNELEQWFDEKTTNWGLSSMCPLNEIHAKDSGFLLNGELKIVVEIKVLETIGKLDVTEETSTITETVDVNGFQLLPSQAKSVSRMFAKHPELASDLRPKNPNLRTGYMSLLLSLIETLSQLPQQMSKDDLLDAYDALGSMRDAGFKLDWLEKKLYEVSEKKENEEASETGLQEMEEELKDMKQKCLEMEALVEKEKAKVSTAKAPISFDDIV.

An MATH domain is found at 6 to 134; sequence DKKITWTIKN…NGELKIVVEI (129 aa). The stretch at 235–289 forms a coiled coil; the sequence is KLDWLEKKLYEVSEKKENEEASETGLQEMEEELKDMKQKCLEMEALVEKEKAKVS.

As to quaternary structure, self-interacts. Interacts with RTM1.

Required for the restriction of long-distance movement of the pathogenic tobacco etch virus (TEV) without causing a hypersensitive response or inducing systemic acquired resistance. In Arabidopsis thaliana (Mouse-ear cress), this protein is Protein RESTRICTED TEV MOVEMENT 3 (RTM3).